The sequence spans 221 residues: GTP cyclohydrolase 1 (221 aa).

3 residues coordinate Zn(2+): C109, H112, and C180.

The protein belongs to the GTP cyclohydrolase I family. In terms of assembly, toroid-shaped homodecamer, composed of two pentamers of five dimers.

It catalyses the reaction GTP + H2O = 7,8-dihydroneopterin 3'-triphosphate + formate + H(+). The protein operates within cofactor biosynthesis; 7,8-dihydroneopterin triphosphate biosynthesis; 7,8-dihydroneopterin triphosphate from GTP: step 1/1. The protein is GTP cyclohydrolase 1 of Blochmanniella pennsylvanica (strain BPEN).